A 351-amino-acid chain; its full sequence is sn-1 oleoyl-lipid 12-desaturase (351 aa).

The segment at 1 to 20 is disordered; sequence MTLSIVKSEDSSSRPSAVPS. 2 helical membrane-spanning segments follow: residues 44–62 and 68–88; these read AWMT…WLGI and FLLP…FVIG. The Histidine box-1 motif lies at 89-93; the sequence is HDCGH. A helical membrane pass occupies residues 100–120; that stretch reads VWVNDWVGHILFLPIIYPFHS. The Histidine box-2 signature appears at 125–129; that stretch reads HNQHH. A run of 2 helical transmembrane segments spans residues 199–219 and 221–241; these read LLVI…IGVW and FVKF…TFTL. The Histidine box-3 signature appears at 289-293; that stretch reads HHVTT.

This sequence belongs to the fatty acid desaturase type 2 family. Fe(2+) is required as a cofactor.

The protein localises to the cellular thylakoid membrane. It catalyses the reaction a 1-[(9Z)-octadecenoyl]-2-acyl-glycerolipid + 2 reduced [2Fe-2S]-[ferredoxin] + O2 + 2 H(+) = a 1-[(9Z,12Z)-octadecdienoyl]-2-acyl-glycerolipid + 2 oxidized [2Fe-2S]-[ferredoxin] + 2 H2O. The protein operates within lipid metabolism; polyunsaturated fatty acid biosynthesis. Desaturase involved in fatty acid biosynthesis. Introduces a double bond at carbon 12 of oleoyl groups (18:1) attached to the sn-1 position of the glycerol moiety of membrane glycerolipids. The sequence is that of sn-1 oleoyl-lipid 12-desaturase from Arthrospira platensis (Spirulina platensis).